The primary structure comprises 205 residues: Small ribosomal subunit protein uS4 (205 aa).

Positions 25–48 (KTIEARPTPPGQHGAKNTRRKKSD) are disordered. In terms of domain architecture, S4 RNA-binding spans 94 to 157 (RRLDNVVFRA…TKLPIVVETL (64 aa)).

The protein belongs to the universal ribosomal protein uS4 family. Part of the 30S ribosomal subunit. Contacts protein S5. The interaction surface between S4 and S5 is involved in control of translational fidelity.

In terms of biological role, one of the primary rRNA binding proteins, it binds directly to 16S rRNA where it nucleates assembly of the body of the 30S subunit. With S5 and S12 plays an important role in translational accuracy. This Methylobacillus flagellatus (strain ATCC 51484 / DSM 6875 / VKM B-1610 / KT) protein is Small ribosomal subunit protein uS4.